The primary structure comprises 246 residues: Phosphonates import ATP-binding protein PhnC (246 aa).

One can recognise an ABC transporter domain in the interval 2–246; sequence IKFENVSKVY…ILDEVYRKEG (245 aa). 35-42 provides a ligand contact to ATP; sequence GTSGAGKS.

The protein belongs to the ABC transporter superfamily. Phosphonates importer (TC 3.A.1.9.1) family. The complex is composed of two ATP-binding proteins (PhnC), two transmembrane proteins (PhnE) and a solute-binding protein (PhnD).

The protein resides in the cell membrane. It catalyses the reaction phosphonate(out) + ATP + H2O = phosphonate(in) + ADP + phosphate + H(+). Functionally, part of the ABC transporter complex PhnCDE involved in phosphonates import. Responsible for energy coupling to the transport system. This chain is Phosphonates import ATP-binding protein PhnC, found in Lactococcus lactis subsp. cremoris (strain SK11).